The chain runs to 244 residues: Signal recognition particle receptor subunit beta (244 aa).

Residues 7–23 (IIACLLVIGTTIALIAV) form a helical membrane-spanning segment. Residues 45–53 (GPQNSGKTS), 66–69 (TVVS), Gly-90, and 154–157 (NKSE) contribute to the GTP site.

The protein belongs to the SRP receptor beta subunit family. In terms of assembly, heterodimer of an alpha and a beta chain.

The protein resides in the endoplasmic reticulum membrane. In terms of biological role, component of the signal recognition particle (SRP) complex receptor (SR). Ensures, in conjunction with the SRP complex, the correct targeting of the nascent secretory proteins to the endoplasmic reticulum membrane system. May mediate the membrane association of SR. The protein is Signal recognition particle receptor subunit beta (SRP102) of Saccharomyces cerevisiae (strain ATCC 204508 / S288c) (Baker's yeast).